The primary structure comprises 147 residues: Hemoglobin subunit gamma (147 aa).

One can recognise a Globin domain in the interval 3 to 147 (HFTAEEKAVI…VAIALAHKYH (145 aa)). 2 residues coordinate heme b: H64 and H93.

This sequence belongs to the globin family. Heterotetramer of two alpha chains and two gamma chains in fetal hemoglobin (Hb F). Red blood cells.

In terms of biological role, gamma chains make up the fetal hemoglobin F, in combination with alpha chains. In Eulemur fulvus fulvus (Brown lemur), this protein is Hemoglobin subunit gamma (HBG).